A 92-amino-acid polypeptide reads, in one-letter code: Small ribosomal subunit protein uS19c (92 aa).

Belongs to the universal ribosomal protein uS19 family.

The protein localises to the plastid. It is found in the chloroplast. Its function is as follows. Protein S19 forms a complex with S13 that binds strongly to the 16S ribosomal RNA. The sequence is that of Small ribosomal subunit protein uS19c from Spirogyra maxima (Green alga).